Reading from the N-terminus, the 683-residue chain is Translation factor guf1, mitochondrial (683 aa).

A mitochondrion-targeting transit peptide spans 1 to 43; the sequence is MRGCLQLARWLSAAPKGTAASLTRAPFVLANAPRYFTSSASRA. Positions 66–250 constitute a tr-type G domain; the sequence is ERYRNFCIVA…KIPAYGHFPV (185 aa). GTP contacts are provided by residues 75-82, 139-143, and 193-196; these read AHVDHGKS, DTPGH, and NKVD.

This sequence belongs to the TRAFAC class translation factor GTPase superfamily. Classic translation factor GTPase family. LepA subfamily.

It is found in the mitochondrion inner membrane. It carries out the reaction GTP + H2O = GDP + phosphate + H(+). In terms of biological role, promotes mitochondrial protein synthesis. May act as a fidelity factor of the translation reaction, by catalyzing a one-codon backward translocation of tRNAs on improperly translocated ribosomes. Binds to mitochondrial ribosomes in a GTP-dependent manner. This is Translation factor guf1, mitochondrial (guf1) from Aspergillus fumigatus (strain ATCC MYA-4609 / CBS 101355 / FGSC A1100 / Af293) (Neosartorya fumigata).